Here is a 174-residue protein sequence, read N- to C-terminus: Ribosome maturation factor RimM (174 aa).

The PRC barrel domain maps to 97-171 (EGYYYDFDII…RMVIDPIPGL (75 aa)).

It belongs to the RimM family. Binds ribosomal protein uS19.

It localises to the cytoplasm. Functionally, an accessory protein needed during the final step in the assembly of 30S ribosomal subunit, possibly for assembly of the head region. Essential for efficient processing of 16S rRNA. May be needed both before and after RbfA during the maturation of 16S rRNA. It has affinity for free ribosomal 30S subunits but not for 70S ribosomes. The sequence is that of Ribosome maturation factor RimM from Symbiobacterium thermophilum (strain DSM 24528 / JCM 14929 / IAM 14863 / T).